The primary structure comprises 623 residues: UvrABC system protein C (623 aa).

The region spanning Ala21–Val100 is the GIY-YIG domain. The UVR domain maps to Asp210–Leu245.

This sequence belongs to the UvrC family. Interacts with UvrB in an incision complex.

It is found in the cytoplasm. Its function is as follows. The UvrABC repair system catalyzes the recognition and processing of DNA lesions. UvrC both incises the 5' and 3' sides of the lesion. The N-terminal half is responsible for the 3' incision and the C-terminal half is responsible for the 5' incision. This is UvrABC system protein C from Synechococcus sp. (strain JA-2-3B'a(2-13)) (Cyanobacteria bacterium Yellowstone B-Prime).